Reading from the N-terminus, the 194-residue chain is Translationally-controlled tumor protein homolog 2 (194 aa).

In terms of domain architecture, TCTP spans 1 to 194 (MKLYKDLIGN…IKYGLLQVDV (194 aa)).

This sequence belongs to the TCTP family.

Its subcellular location is the cytoplasm. Functionally, involved in calcium binding and microtubule stabilization. The protein is Translationally-controlled tumor protein homolog 2 of Dictyostelium discoideum (Social amoeba).